Consider the following 256-residue polypeptide: (R)-S-adenosyl-L-methionine hydrolase (256 aa).

Asp7, His41, Asp68, and Asn183 together coordinate adenosine. (R)-S-adenosyl-L-methionine-binding residues include Asn183, Tyr212, Ser226, Glu231, Val234, and Met236. Val234 is an adenosine binding site.

Belongs to the SAM hydrolase / SAM-dependent halogenase family. As to quaternary structure, homotrimer.

It catalyses the reaction (R)-S-adenosyl-L-methionine + H2O = adenosine + L-methionine + H(+). Its function is as follows. Catalyzes the hydrolysis of S-adenosyl-L-methionine (SAM) into adenosine and L-methionine. Is likely stereoselective, specifically hydrolyzing (R)-S-adenosyl-L-methionine ((R)-SAM), the inactive form of the ubiquitous cofactor SAM, and not the active form of SAM, (S)-S-adenosyl-L-methionine. Probaly plays a role in preventing accumulation of (R)-S-adenosyl-L-methionine in cells; maintenance of (S)-S-denosyl-L-methionine homochirality is important for cellular health given that the (R)-form is largely inactive as a methyl donor and can function as an inhibitor of methyltransferases. Is unable to mediate a fluorination or chlorination reaction with SAM. In Pyrococcus horikoshii (strain ATCC 700860 / DSM 12428 / JCM 9974 / NBRC 100139 / OT-3), this protein is (R)-S-adenosyl-L-methionine hydrolase.